A 104-amino-acid chain; its full sequence is Phosphoribosyl-ATP pyrophosphatase (104 aa).

Belongs to the PRA-PH family.

It is found in the cytoplasm. It carries out the reaction 1-(5-phospho-beta-D-ribosyl)-ATP + H2O = 1-(5-phospho-beta-D-ribosyl)-5'-AMP + diphosphate + H(+). It functions in the pathway amino-acid biosynthesis; L-histidine biosynthesis; L-histidine from 5-phospho-alpha-D-ribose 1-diphosphate: step 2/9. In Methanosarcina barkeri (strain Fusaro / DSM 804), this protein is Phosphoribosyl-ATP pyrophosphatase.